The sequence spans 273 residues: MGVYHADALVIRSREYGESDRLLTLFSREYGKIQAVAKGVRKPKSRQRAGAQLFTYAEYLLHKGKSLDTVNQVSPRESFPHLWTDLDMSMAATAMAELLDLATLPGQPHPELFTLTFSSLFLVESCDPALVQCTYALKLMNYLGYRPRLVECAECGQRVQGERLLFSPDAGGVVCRQCQTQGSSPAVGRWVSGGSLGLMRQLLQGELEKLNRLRWNQWSKKEILEVSQYFCEQTLDKSLRSWSMGNRLVNVGQNPSGKDDLNERRDVDGTGES.

Residues 250–273 (NVGQNPSGKDDLNERRDVDGTGES) form a disordered region. The span at 257-273 (GKDDLNERRDVDGTGES) shows a compositional bias: basic and acidic residues.

This sequence belongs to the RecO family.

In terms of biological role, involved in DNA repair and RecF pathway recombination. This Desulfitobacterium hafniense (strain DSM 10664 / DCB-2) protein is DNA repair protein RecO.